A 366-amino-acid polypeptide reads, in one-letter code: Capsular polysaccharide phosphotransferase LcbA (366 aa).

The protein belongs to the stealth family.

This chain is Capsular polysaccharide phosphotransferase LcbA (lcbA), found in Neisseria meningitidis.